A 74-amino-acid chain; its full sequence is U4-theraphotoxin-Cg1a (74 aa).

The first 19 residues, 1 to 19, serve as a signal peptide directing secretion; the sequence is MNATIFAFLLLLNLAMHNA. Residues 20–39 constitute a propeptide that is removed on maturation; that stretch reads TEQSSETDMDDTLLIPEINR. 3 disulfides stabilise this stretch: cysteine 42–cysteine 56, cysteine 49–cysteine 61, and cysteine 55–cysteine 71.

The protein belongs to the neurotoxin 36 family. 01 subfamily. In terms of tissue distribution, expressed by the venom gland.

The protein resides in the secreted. Functionally, probable ion channel inhibitor. The chain is U4-theraphotoxin-Cg1a from Chilobrachys guangxiensis (Chinese earth tiger tarantula).